The sequence spans 62 residues: Photosystem II reaction center protein Z (62 aa).

2 helical membrane-spanning segments follow: residues 8–28 (AVFA…VVFA) and 41–61 (FSGT…NSLI).

Belongs to the PsbZ family. As to quaternary structure, PSII is composed of 1 copy each of membrane proteins PsbA, PsbB, PsbC, PsbD, PsbE, PsbF, PsbH, PsbI, PsbJ, PsbK, PsbL, PsbM, PsbT, PsbY, PsbZ, Psb30/Ycf12, at least 3 peripheral proteins of the oxygen-evolving complex and a large number of cofactors. It forms dimeric complexes.

The protein localises to the plastid. Its subcellular location is the chloroplast thylakoid membrane. In terms of biological role, may control the interaction of photosystem II (PSII) cores with the light-harvesting antenna, regulates electron flow through the 2 photosystem reaction centers. PSII is a light-driven water plastoquinone oxidoreductase, using light energy to abstract electrons from H(2)O, generating a proton gradient subsequently used for ATP formation. The polypeptide is Photosystem II reaction center protein Z (Arabidopsis thaliana (Mouse-ear cress)).